The following is a 250-amino-acid chain: Ribonuclease HII (250 aa).

Residues 66 to 250 (ELVAGVDEVG…TFAPVSDFFK (185 aa)) form the RNase H type-2 domain. Residues Asp72, Glu73, and Asp164 each coordinate a divalent metal cation.

The protein belongs to the RNase HII family. It depends on Mn(2+) as a cofactor. Requires Mg(2+) as cofactor.

It is found in the cytoplasm. It catalyses the reaction Endonucleolytic cleavage to 5'-phosphomonoester.. Endonuclease that specifically degrades the RNA of RNA-DNA hybrids. This Lactobacillus helveticus (strain DPC 4571) protein is Ribonuclease HII.